A 65-amino-acid polypeptide reads, in one-letter code: Hirudin-3A' (65 aa).

The tract at residues 1-3 (VVY) is interaction with thrombin active site. Disulfide bonds link C6-C14, C16-C28, and C22-C39. Positions 32-65 (SDGEKNECVTGEGTPKPQSHNDGDFEEIPEEYLQ) are disordered. O-linked (GalNAc...) threonine glycosylation is present at T45. The segment at 55 to 65 (DFEEIPEEYLQ) is interaction with fibrinogen-binding exosite of thrombin. Residues 55–65 (DFEEIPEEYLQ) show a composition bias toward acidic residues. Sulfotyrosine is present on Y63.

The protein belongs to the protease inhibitor I14 (hirudin) family.

The protein localises to the secreted. Hirudin is a potent thrombin-specific protease inhibitor. It forms a stable non-covalent complex with alpha-thrombin, thereby abolishing its ability to cleave fibrinogen. This Hirudo medicinalis (Medicinal leech) protein is Hirudin-3A'.